Here is a 173-residue protein sequence, read N- to C-terminus: Ribosome maturation factor RimM (173 aa).

One can recognise a PRC barrel domain in the interval 78-157 (EEEFYLADLI…VLVVPPEEVE (80 aa)). A disordered region spans residues 152–173 (PPEEVEAQEPPEKDAGGDEPSP).

This sequence belongs to the RimM family. As to quaternary structure, binds ribosomal protein uS19.

It is found in the cytoplasm. An accessory protein needed during the final step in the assembly of 30S ribosomal subunit, possibly for assembly of the head region. Essential for efficient processing of 16S rRNA. May be needed both before and after RbfA during the maturation of 16S rRNA. It has affinity for free ribosomal 30S subunits but not for 70S ribosomes. In Beijerinckia indica subsp. indica (strain ATCC 9039 / DSM 1715 / NCIMB 8712), this protein is Ribosome maturation factor RimM.